A 237-amino-acid chain; its full sequence is Peptidase E (237 aa).

Active-site charge relay system residues include S122, D137, and H159.

Belongs to the peptidase S51 family.

The protein localises to the cytoplasm. The enzyme catalyses Dipeptidase E catalyzes the hydrolysis of dipeptides Asp-|-Xaa. It does not act on peptides with N-terminal Glu, Asn or Gln, nor does it cleave isoaspartyl peptides.. In terms of biological role, hydrolyzes dipeptides containing N-terminal aspartate residues. May play a role in allowing the cell to use peptide aspartate to spare carbon otherwise required for the synthesis of the aspartate family of amino acids. The protein is Peptidase E of Shewanella baltica (strain OS185).